A 362-amino-acid chain; its full sequence is Histidine biosynthesis bifunctional protein HisB (362 aa).

A histidinol-phosphatase region spans residues 1–173 (MQPTLFIDRD…TVTNCGKRPP (173 aa)). The active-site Nucleophile is the D8. Mg(2+) contacts are provided by D8 and D10. D10 (proton donor) is an active-site residue. Zn(2+)-binding residues include C91, H93, C99, and C101. Position 128 (D128) interacts with Mg(2+). Positions 174-362 (RFAEVIRQTK…NEMPSSKGVL (189 aa)) are imidazoleglycerol-phosphate dehydratase.

It in the N-terminal section; belongs to the histidinol-phosphatase family. This sequence in the C-terminal section; belongs to the imidazoleglycerol-phosphate dehydratase family. Mg(2+) serves as cofactor. Requires Zn(2+) as cofactor.

The protein resides in the cytoplasm. It catalyses the reaction D-erythro-1-(imidazol-4-yl)glycerol 3-phosphate = 3-(imidazol-4-yl)-2-oxopropyl phosphate + H2O. The enzyme catalyses L-histidinol phosphate + H2O = L-histidinol + phosphate. It functions in the pathway amino-acid biosynthesis; L-histidine biosynthesis; L-histidine from 5-phospho-alpha-D-ribose 1-diphosphate: step 6/9. Its pathway is amino-acid biosynthesis; L-histidine biosynthesis; L-histidine from 5-phospho-alpha-D-ribose 1-diphosphate: step 8/9. The chain is Histidine biosynthesis bifunctional protein HisB from Haemophilus influenzae (strain 86-028NP).